A 105-amino-acid polypeptide reads, in one-letter code: Protein LITTLE ZIPPER 2 (105 aa).

The segment at 1–20 is disordered; the sequence is MCLTTSEPPFPDTDTPTMRS. The stretch at 39-60 forms a coiled coil; sequence NLTRRRRLLKEQKEMEMRNLKL.

As to quaternary structure, interacts with REV.

Competitive inhibitor of the HD-ZIPIII transcription factors in shoot apical meristem (SAM) development. Acts by forming non-functional heterodimers. Part of a negative feedback loop. Essential for proper functioning of stem cells in the SAM. The protein is Protein LITTLE ZIPPER 2 of Arabidopsis thaliana (Mouse-ear cress).